Here is a 247-residue protein sequence, read N- to C-terminus: ATP synthase subunit a, chloroplastic (247 aa).

5 helical membrane passes run 36–56, 95–115, 134–154, 199–219, and 220–240; these read GQVL…SIFG, VPFI…GALV, INTT…AGFS, LVVG…LMLL, and GLFT…AYIG.

Belongs to the ATPase A chain family. F-type ATPases have 2 components, CF(1) - the catalytic core - and CF(0) - the membrane proton channel. CF(1) has five subunits: alpha(3), beta(3), gamma(1), delta(1), epsilon(1). CF(0) has four main subunits: a, b, b' and c.

The protein localises to the plastid. It is found in the chloroplast thylakoid membrane. Key component of the proton channel; it plays a direct role in the translocation of protons across the membrane. The protein is ATP synthase subunit a, chloroplastic of Mesostigma viride (Green alga).